Reading from the N-terminus, the 225-residue chain is MADS-box transcription factor 5 (225 aa).

One can recognise an MADS-box domain in the interval 1-61; it reads MGRGKVELKR…GRLFEFSTSS (61 aa). A K-box domain is found at 89-179; it reads ELSNYQEYLK…KRKIQETSGE (91 aa).

In terms of assembly, may interact with the K-box of MADS6.

It localises to the nucleus. Its function is as follows. Probable transcription factor. The polypeptide is MADS-box transcription factor 5 (MADS5) (Oryza sativa subsp. indica (Rice)).